A 266-amino-acid polypeptide reads, in one-letter code: Derlin-1 (266 aa).

Topologically, residues 1–20 (MSSPGEFYNSLPPITKAYGT) are cytoplasmic. The helical transmembrane segment at 21–41 (LCFFTTVATQLGLVAPVHIAL) threads the bilayer. At 42-55 (IPELVLKQFQIWRL) the chain is on the lumenal side. A helical transmembrane segment spans residues 56–76 (ITNLFFLGGFSINFGIRLLMI). The Cytoplasmic segment spans residues 77–94 (ARYGVQLEKGPFERRTAD). A helical membrane pass occupies residues 95-115 (FLWMMIFGSFTLLVLSVIPFF). Residues 116–156 (WTPFLGVSLVFMLLYLWSREFPNANISLYGLVTLKAFYLPW) are Lumenal-facing. The helical transmembrane segment at 157–177 (AMLALDVIFGSPIMPDLLGII) threads the bilayer. The Cytoplasmic segment spans residues 178–266 (AGHLYYFLTV…FRGRSYRLTD (89 aa)). The segment at 235–266 (GGVGGGGAYSSARAPPESSNTAFRGRSYRLTD) is disordered.

This sequence belongs to the derlin family.

It is found in the endoplasmic reticulum membrane. May be involved in the degradation process of specific misfolded endoplasmic reticulum (ER) luminal proteins. The protein is Derlin-1 (DER1) of Arabidopsis thaliana (Mouse-ear cress).